An 831-amino-acid chain; its full sequence is Leucine--tRNA ligase (831 aa).

The short motif at 35-45 is the 'HIGH' region element; sequence PYPSGKIHVGH. A 'KMSKS' region motif is present at residues 600–604; that stretch reads KMSKS. Lys-603 serves as a coordination point for ATP.

Belongs to the class-I aminoacyl-tRNA synthetase family.

It is found in the cytoplasm. It catalyses the reaction tRNA(Leu) + L-leucine + ATP = L-leucyl-tRNA(Leu) + AMP + diphosphate. This chain is Leucine--tRNA ligase, found in Rickettsia bellii (strain RML369-C).